The following is a 137-amino-acid chain: MMQPKKTKFRKAHKGRIHGVATSGATLSFGQFGLKAMAPERITARQIEAARRALTRHMKRAGRVWIRIFPDLPVSKKPAEVRMGSGKGTPELWVARVKPGRVIFEIDGVNVQVAKEALTLAAAKLPIKTRFVARIAE.

It belongs to the universal ribosomal protein uL16 family. Part of the 50S ribosomal subunit.

Functionally, binds 23S rRNA and is also seen to make contacts with the A and possibly P site tRNAs. In Rhodopseudomonas palustris (strain BisB18), this protein is Large ribosomal subunit protein uL16.